The sequence spans 549 residues: Glucose-6-phosphate isomerase (549 aa).

Glutamate 353 functions as the Proton donor in the catalytic mechanism. Residues histidine 384 and lysine 510 contribute to the active site.

This sequence belongs to the GPI family.

The protein localises to the cytoplasm. The catalysed reaction is alpha-D-glucose 6-phosphate = beta-D-fructose 6-phosphate. The protein operates within carbohydrate biosynthesis; gluconeogenesis. Its pathway is carbohydrate degradation; glycolysis; D-glyceraldehyde 3-phosphate and glycerone phosphate from D-glucose: step 2/4. Catalyzes the reversible isomerization of glucose-6-phosphate to fructose-6-phosphate. This Mycolicibacterium smegmatis (Mycobacterium smegmatis) protein is Glucose-6-phosphate isomerase.